The chain runs to 174 residues: Acetolactate synthase small subunit (174 aa).

Residues 4–78 (TLSVLVQDEA…NILNVQDVTN (75 aa)) enclose the ACT domain.

Belongs to the acetolactate synthase small subunit family. In terms of assembly, dimer of large and small chains.

It localises to the plastid. It is found in the chloroplast. The enzyme catalyses 2 pyruvate + H(+) = (2S)-2-acetolactate + CO2. Its pathway is amino-acid biosynthesis; L-isoleucine biosynthesis; L-isoleucine from 2-oxobutanoate: step 1/4. The protein operates within amino-acid biosynthesis; L-valine biosynthesis; L-valine from pyruvate: step 1/4. This chain is Acetolactate synthase small subunit (ilvH), found in Pyropia yezoensis (Susabi-nori).